The sequence spans 275 residues: Probable ribosomal RNA small subunit methyltransferase A (275 aa).

Residues leucine 13, glycine 38, glutamate 59, aspartate 84, and asparagine 101 each contribute to the S-adenosyl-L-methionine site.

It belongs to the class I-like SAM-binding methyltransferase superfamily. rRNA adenine N(6)-methyltransferase family. RsmA subfamily.

The protein localises to the cytoplasm. Its function is as follows. Specifically dimethylates two adjacent adenosines in the loop of a conserved hairpin near the 3'-end of 16S rRNA in the 30S particle. May play a critical role in biogenesis of 30S subunits. The polypeptide is Probable ribosomal RNA small subunit methyltransferase A (Methanocaldococcus jannaschii (strain ATCC 43067 / DSM 2661 / JAL-1 / JCM 10045 / NBRC 100440) (Methanococcus jannaschii)).